A 300-amino-acid chain; its full sequence is Oxidoreductase BOA1 (300 aa).

This sequence belongs to the NmrA-type oxidoreductase family. Isoflavone reductase subfamily.

It functions in the pathway polyketide biosynthesis. Oxidoreductase; part of the gene cluster A that mediates the biosynthesis of botcinic acid and its botcinin derivatives, acetate-derived polyketides that contribute to virulence when combined with the sesquiterpene botrydial. Botcinic acid and its derivatives have been shown to induce chlorosis and necrosis during host plant infection, but also have antifungal activities. Two polyketide synthases, BOA6 and BOA9, are involved in the biosynthesis of botcinins. BOA6 mediates the formation of the per-methylated tetraketide core by condensation of four units of malonyl-CoA with one unit of acetyl-CoA, which would be methylated in activated methylene groups to yield a bicyclic acid intermediate that could then either be converted to botrylactone derivatives or lose the starter acetate unit through a retro-Claisen type C-C bond cleavage to yield botcinin derivatives. The second polyketide synthase, BOA9, is probably required for the biosynthesis of the tetraketide side chain of botcinins. The methyltransferase (MT) domain within BOA6 is probably responsible for the incorporation of four methyl groups. The trans-enoyl reductase BOA5 might take over the enoyl reductase function of BOA6 that misses an ER domain. The monooxygenases BOA2, BOA3 and BOA4 might be involved in further hydroxylations at C4, C5 and C8, whereas BOA7, close to BOA9, could potentially be involved in the hydroxylation at C4 in the side chain of botcinins. In Botryotinia fuckeliana (strain B05.10) (Noble rot fungus), this protein is Oxidoreductase BOA1.